We begin with the raw amino-acid sequence, 354 residues long: Isopentenyl-diphosphate delta-isomerase (354 aa).

Substrate is bound at residue 11–12 (KK). Residues S67, 68 to 70 (SMT), S98, and N126 each bind FMN. 98 to 100 (SFK) contributes to the substrate binding site. Q160 provides a ligand contact to substrate. Position 161 (E161) interacts with Mg(2+). FMN contacts are provided by residues K192, T222, and 289-290 (AA).

The protein belongs to the IPP isomerase type 2 family. As to quaternary structure, homooctamer. Dimer of tetramers. FMN is required as a cofactor. NADPH serves as cofactor. It depends on Mg(2+) as a cofactor.

The protein localises to the cytoplasm. The catalysed reaction is isopentenyl diphosphate = dimethylallyl diphosphate. Involved in the biosynthesis of isoprenoids. Catalyzes the 1,3-allylic rearrangement of the homoallylic substrate isopentenyl (IPP) to its allylic isomer, dimethylallyl diphosphate (DMAPP). The polypeptide is Isopentenyl-diphosphate delta-isomerase (Borrelia garinii subsp. bavariensis (strain ATCC BAA-2496 / DSM 23469 / PBi) (Borreliella bavariensis)).